Reading from the N-terminus, the 784-residue chain is MEGAMAVRVTAAHTAEAQAEAGREAGEGAVAAVAAALAPSGFLGLPAPFSEEDEDDVHRCGRCQAEFTALEDFVQHKIQKACQRAPPEALPATPATTALLGQEVVPAAPGPEEPITVAHIVVEAASLAADISHASDLVGGGHIKEVIVAAEAELGDGEMAEAPGSPRQQGLGLAGEGEQAQVKLLVNKDGRYVCALCHKTFKTGSILKAHMVTHSSRKDHECKLCGASFRTKGSLIRHHRRHTDERPYKCSKCGKSFRESGALTRHLKSLTPCTEKIRFSVSKDVVVSKEDARAGSGAGAAGLGTATSSVTGEPIETSPVIHLVTDAKGTVIHEVHVQMQELSLGMKALAPEPPVSQELPCSSEGSRENLLHQAMQNSGIVLERAAGEEGALEPAPAAGSSPQPLAVAAPQLPVLEVQPLETQVASEASAVPRTHPCPQCSETFPTAATLEAHKRGHTGPRPFACAQCGKAFPKAYLLKKHQEVHVRERRFRCGDCGKLYKTIAHVRGHRRVHSDERPYPCPKCGKRYKTKNAQQVHFRTHLEEKPHVCQFCSRGFREKGSLVRHVRHHTGEKPFKCYKCGRGFAEHGTLNRHLRTKGGCLLEVEELLVSEDSPAAATTVLTEDPHTVLVEFSSVVADTQEYIIEATADDAETSEATEIIEGTQTEVDSHIMKVVQQIVHQASAGHQIIVQNVTMDEETALGPEAAAADTITIATPESLTEQVAMTLASAISEGTVLAARAGTSGTEQATVTMVSSEDIEILEHAGELVIASPEGQLEVQTVIV.

The required for ubiquitin ligase activity stretch occupies residues 41–85 (GFLGLPAPFSEEDEDDVHRCGRCQAEFTALEDFVQHKIQKACQRA). At S50 the chain carries Phosphoserine. Positions 184–263 (LLVNKDGRYV…GKSFRESGAL (80 aa)) are mediates dimerization, DNA-binding, transcription repression of CCNA2 and interaction with HMGA2. 2 C2H2-type zinc fingers span residues 192–214 (YVCA…MVTH) and 220–242 (HECK…HRRH). Residues 248–272 (YKCSKCGKSFRESGALTRHLKSLTP) form a C2H2-type 3; degenerate zinc finger. The mediates interaction with CDKN2A stretch occupies residues 369–566 (NLLHQAMQNS…REKGSLVRHV (198 aa)). C2H2-type zinc fingers lie at residues 435–457 (HPCP…KRGH), 463–485 (FACA…QEVH), 491–513 (FRCG…RRVH), 519–541 (YPCP…FRTH), and 547–569 (HVCQ…VRHH). The interval 435 to 599 (HPCPQCSETF…LNRHLRTKGG (165 aa)) is interaction with BMI1. The segment at 521-580 (CPKCGKRYKTKNAQQVHFRTHLEEKPHVCQFCSRGFREKGSLVRHVRHHTGEKPFKCYKC) is mediates interaction with TP53. The C2H2-type 9; degenerate zinc-finger motif lies at 575 to 597 (FKCYKCGRGFAEHGTLNRHLRTK). The interval 575–597 (FKCYKCGRGFAEHGTLNRHLRTK) is mediates interaction with RASSF1.

As to quaternary structure, homodimer; binds DNA as a dimer. Forms a complex with CDKN2A and TP53. Interactions with TP53, RB1, ANP32A, BMI1 and FHL2 regulate E4F1 activity. Interacts with HDAC1, HMGA2 and RASSF1. In terms of assembly, (Microbial infection) Interacts with HBV protein X. Proteolytic cleavage produces a 50 kDa N-terminal peptide (p50E4F) which has a DNA-binding activity and activates transcription in presence of the adenoviral E1A protein. The major full-length protein (p120E4F) functions as a repressor of transcription. Post-translationally, phosphorylated; p120E4F and p50E4F are both phosphorylated. Phosphorylation is cell cycle-dependent and differentially regulates DNA-binding activity and function of both forms. In terms of processing, may be sumoylated by UBE2I upon interaction with CDKN2A. As to expression, ubiquitously expressed.

It is found in the nucleus. The protein localises to the nucleoplasm. It localises to the cytoplasm. It catalyses the reaction S-ubiquitinyl-[E2 ubiquitin-conjugating enzyme]-L-cysteine + [acceptor protein]-L-lysine = [E2 ubiquitin-conjugating enzyme]-L-cysteine + N(6)-ubiquitinyl-[acceptor protein]-L-lysine.. The protein operates within protein modification; protein ubiquitination. Functionally, may function as a transcriptional repressor. May also function as a ubiquitin ligase mediating ubiquitination of chromatin-associated TP53. Functions in cell survival and proliferation through control of the cell cycle. Functions in the p53 and pRB tumor suppressor pathways and regulates the cyclin CCNA2 transcription. Its function is as follows. Identified as a cellular target of the adenoviral oncoprotein E1A, it is required for both transcriptional activation and repression of viral genes. This Homo sapiens (Human) protein is Transcription factor E4F1 (E4F1).